Here is a 644-residue protein sequence, read N- to C-terminus: Polyglycine hydrolase (644 aa).

Positions M1–S23 are cleaved as a signal peptide. Residues N100, N144, N159, N244, and N340 are each glycosylated (N-linked (GlcNAc...) asparagine). C149 and C183 are disulfide-bonded. S369 is an active-site residue. 4 N-linked (GlcNAc...) asparagine glycosylation sites follow: N389, N410, N443, and N486.

It belongs to the peptidase S12 family.

The protein resides in the secreted. It carries out the reaction a glycyl-glycyl-[protein] + H2O = N-terminal glycyl-[protein] + [protein]-C-terminal glycine. With respect to regulation, not inhibited by phenylmethylsulfonyl fluoride (PMSF; serine peptidase class S1 inhibitor), clavulanic acid (beta-lactamase inhibitor) or ampicillin (penicillin-binding protein (PBP) inhibitor). Its function is as follows. Serine-type endopeptidase that cleaves Gly-Gly bonds in the polyglycine linker of host plant class IV chitinases to disrupt their chitin-binding, and thereby plays a role in lowering the defense responses of the host to the fungus. Degrades Z.mays Endochitinase A (CHIA). Has low proteolytic activity on Z.mays Endochitinase B (CHIB). In Cochliobolus carbonum (strain 26-R-13) (Maize leaf spot fungus), this protein is Polyglycine hydrolase.